Consider the following 193-residue polypeptide: MNAKTLDAIKPFLDWIPLIVFFYIYKTTEGEGSEHIIAATTGLLIATLIVYGLMFVLQKFTLEKRQWLVVVLTVVFGGLTMAFQDDFYIRLKAPIINAVFAFGLAMSPLFLGGTPGIQKMLGPIFEMTPKQWMKLNWVWVGFFTLMAVLQALFAFVWVEYWAMFTAFGDMIVMVVFMVAQFWFLRGFMRKDIK.

6 helical membrane-spanning segments follow: residues 5–25 (TLDA…FYIY), 36–56 (IIAA…LMFV), 67–87 (WLVV…QDDF), 93–113 (APII…FLGG), 138–158 (VWVG…FVWV), and 164–184 (FTAF…FWFL).

It belongs to the YciB family.

The protein resides in the cell inner membrane. In terms of biological role, plays a role in cell envelope biogenesis, maintenance of cell envelope integrity and membrane homeostasis. The chain is Inner membrane-spanning protein YciB from Vitreoscilla sp. (strain C1).